The chain runs to 280 residues: Acetyl-coenzyme A carboxylase carboxyl transferase subunit beta (280 aa).

In terms of domain architecture, CoA carboxyltransferase N-terminal spans 24-280 (AWIKCDKCKN…IYTLIRHTHG (257 aa)). The Zn(2+) site is built by Cys-28, Cys-31, Cys-47, and Cys-50. The C4-type zinc finger occupies 28-50 (CDKCKNILYIEDLLKNLKICPHC).

This sequence belongs to the AccD/PCCB family. Acetyl-CoA carboxylase is a heterohexamer composed of biotin carboxyl carrier protein (AccB), biotin carboxylase (AccC) and two subunits each of ACCase subunit alpha (AccA) and ACCase subunit beta (AccD). It depends on Zn(2+) as a cofactor.

The protein resides in the cytoplasm. The catalysed reaction is N(6)-carboxybiotinyl-L-lysyl-[protein] + acetyl-CoA = N(6)-biotinyl-L-lysyl-[protein] + malonyl-CoA. It functions in the pathway lipid metabolism; malonyl-CoA biosynthesis; malonyl-CoA from acetyl-CoA: step 1/1. Component of the acetyl coenzyme A carboxylase (ACC) complex. Biotin carboxylase (BC) catalyzes the carboxylation of biotin on its carrier protein (BCCP) and then the CO(2) group is transferred by the transcarboxylase to acetyl-CoA to form malonyl-CoA. The protein is Acetyl-coenzyme A carboxylase carboxyl transferase subunit beta of Sulfurihydrogenibium sp. (strain YO3AOP1).